The chain runs to 66 residues: Disintegrin EO5B (66 aa).

A Disintegrin domain is found at 1–65 (NSAHPCCDPV…DCPRNPYKGK (65 aa)). Disulfide bonds link Cys6/Cys29, Cys20/Cys26, Cys25/Cys50, and Cys38/Cys57. A Cell attachment site; atypical (VGD) motif is present at residues 42–44 (VGD).

This sequence belongs to the disintegrin family. Dimeric disintegrin subfamily. As to quaternary structure, heterodimer with EO4A or EO5A; disulfide-linked. Expressed by the venom gland.

It localises to the secreted. Functionally, poor inhibitor of platelet aggregation. When it dimerizes with EO4A, it inhibits the adhesion of cells expressing the RGD-dependent integrin alpha-5/beta-1 (ITGA5/ITGB1) to immobilized fibronectin. When it dimerizes with EO5A, it inhibits the adhesion of the alpha-4/beta-1 (ITGA4/ITGB1) integrin to VCAM-1. When it dimerizes either with EO4A or EO5A, the inhibition on alpha-IIb/beta-3 (ITGA2B/ITGB3) is low. In Echis ocellatus (Ocellated saw-scaled viper), this protein is Disintegrin EO5B.